The chain runs to 1455 residues: DNA-directed RNA polymerase subunit beta (1455 aa).

This sequence belongs to the RNA polymerase beta chain family. As to quaternary structure, the RNAP catalytic core consists of 2 alpha, 1 beta, 1 beta' and 1 omega subunit. When a sigma factor is associated with the core the holoenzyme is formed, which can initiate transcription.

The enzyme catalyses RNA(n) + a ribonucleoside 5'-triphosphate = RNA(n+1) + diphosphate. Functionally, DNA-dependent RNA polymerase catalyzes the transcription of DNA into RNA using the four ribonucleoside triphosphates as substrates. This is DNA-directed RNA polymerase subunit beta from Rhizorhabdus wittichii (strain DSM 6014 / CCUG 31198 / JCM 15750 / NBRC 105917 / EY 4224 / RW1) (Sphingomonas wittichii).